The chain runs to 413 residues: Queuine tRNA-ribosyltransferase accessory subunit 2 (413 aa).

A disordered region spans residues 298–321 (LEKSETSGAERNGDVGAESEEPDA). Residues Cys349, Cys351, Cys354, and His380 each contribute to the Zn(2+) site.

This sequence belongs to the queuine tRNA-ribosyltransferase family. QTRT2 subfamily. In terms of assembly, heterodimer of a catalytic subunit qtrt1 and an accessory subunit qtrt2. Zn(2+) is required as a cofactor.

The protein localises to the cytoplasm. It is found in the mitochondrion outer membrane. Functionally, non-catalytic subunit of the queuine tRNA-ribosyltransferase (TGT) that catalyzes the base-exchange of a guanine (G) residue with queuine (Q) at position 34 (anticodon wobble position) in tRNAs with GU(N) anticodons (tRNA-Asp, -Asn, -His and -Tyr), resulting in the hypermodified nucleoside queuosine (7-(((4,5-cis-dihydroxy-2-cyclopenten-1-yl)amino)methyl)-7-deazaguanosine). The chain is Queuine tRNA-ribosyltransferase accessory subunit 2 from Xenopus tropicalis (Western clawed frog).